The following is a 330-amino-acid chain: Biotin synthase (330 aa).

The Radical SAM core domain occupies tyrosine 42 to alanine 268. Residues cysteine 60, cysteine 64, and cysteine 67 each contribute to the [4Fe-4S] cluster site. 4 residues coordinate [2Fe-2S] cluster: cysteine 103, cysteine 136, cysteine 196, and arginine 266.

Belongs to the radical SAM superfamily. Biotin synthase family. In terms of assembly, homodimer. The cofactor is [4Fe-4S] cluster. It depends on [2Fe-2S] cluster as a cofactor.

The catalysed reaction is (4R,5S)-dethiobiotin + (sulfur carrier)-SH + 2 reduced [2Fe-2S]-[ferredoxin] + 2 S-adenosyl-L-methionine = (sulfur carrier)-H + biotin + 2 5'-deoxyadenosine + 2 L-methionine + 2 oxidized [2Fe-2S]-[ferredoxin]. It participates in cofactor biosynthesis; biotin biosynthesis; biotin from 7,8-diaminononanoate: step 2/2. Catalyzes the conversion of dethiobiotin (DTB) to biotin by the insertion of a sulfur atom into dethiobiotin via a radical-based mechanism. The polypeptide is Biotin synthase (Macrococcus caseolyticus (strain JCSC5402) (Macrococcoides caseolyticum)).